Reading from the N-terminus, the 174-residue chain is Protein CURVATURE THYLAKOID 1B, chloroplastic (174 aa).

Positions M1 to S20 are disordered. The transit peptide at M1–R63 directs the protein to the chloroplast. Residue A64 is modified to N-acetylalanine. Residues A64–K100 lie on the Stromal side of the membrane. A helical transmembrane segment spans residues Y101 to I121. Residues S122–R126 are Lumenal-facing. Residues L127–Y147 traverse the membrane as a helical segment. Topologically, residues K148–S174 are stromal.

This sequence belongs to the CURT family. Homo- and heterodimers and trimers. Interacts with PSAL. Post-translationally, phosphorylated on either Thr-65 or Thr-66 by a threonine specific thylakoid kinase.

It is found in the plastid. It localises to the chloroplast thylakoid membrane. In terms of biological role, determines thylakoid architecture by inducing membrane curvature. The sequence is that of Protein CURVATURE THYLAKOID 1B, chloroplastic (CURT1B) from Arabidopsis thaliana (Mouse-ear cress).